We begin with the raw amino-acid sequence, 819 residues long: Protein EFR3 homolog A (819 aa).

Phosphoserine is present on residues serine 360, serine 363, serine 420, and serine 692.

This sequence belongs to the EFR3 family. As to quaternary structure, component of a phosphatidylinositol 4-kinase (PI4K) complex, composed of PI4KA, EFR3 (EFR3A or EFR3B), TTC7 (TTC7A or TTC7B) and HYCC (HYCC1 or HYCC2). Palmitoylated at its N-terminus, anchoring the protein to the plasma membrane. Widely expressed. Expressed in neurons of the superior olivary complex of the auditory brainstem. Also expressed at lower levels in the cochlear nucleus, the lateral leminiscal nuclei and the inferior collicus.

It localises to the cell membrane. The protein localises to the cytoplasm. It is found in the cytosol. Component of a complex required to localize phosphatidylinositol 4-kinase (PI4K) to the plasma membrane. The complex acts as a regulator of phosphatidylinositol 4-phosphate (PtdIns(4)P) synthesis. In the complex, EFR3A probably acts as the membrane-anchoring component. Also involved in responsiveness to G-protein-coupled receptors; it is however unclear whether this role is direct or indirect. The protein is Protein EFR3 homolog A of Mus musculus (Mouse).